The following is a 750-amino-acid chain: NAD(P)H-quinone oxidoreductase subunit 5, chloroplastic (750 aa).

The next 16 membrane-spanning stretches (helical) occupy residues 9–29, 39–59, 89–109, 125–145, 147–167, 185–205, 219–239, 267–287, 290–310, 327–347, 354–374, 396–416, 427–447, 554–574, 606–626, and 728–748; these read WIIP…LLLF, IWAF…LDLS, IDSL…LVLI, FAYM…SNLI, IYFF…FWFT, GDFG…SLEF, NEMN…GSVA, ATMV…FVLL, IMNT…TLAI, LGYM…FHLI, ALLF…VGYS, FFFL…CFWS, YSPI…FYMF, FSML…ISFS, FFTN…IASF, and ILLY…FVFI.

Belongs to the complex I subunit 5 family. In terms of assembly, NDH is composed of at least 16 different subunits, 5 of which are encoded in the nucleus.

It localises to the plastid. The protein localises to the chloroplast thylakoid membrane. The catalysed reaction is a plastoquinone + NADH + (n+1) H(+)(in) = a plastoquinol + NAD(+) + n H(+)(out). It carries out the reaction a plastoquinone + NADPH + (n+1) H(+)(in) = a plastoquinol + NADP(+) + n H(+)(out). In terms of biological role, NDH shuttles electrons from NAD(P)H:plastoquinone, via FMN and iron-sulfur (Fe-S) centers, to quinones in the photosynthetic chain and possibly in a chloroplast respiratory chain. The immediate electron acceptor for the enzyme in this species is believed to be plastoquinone. Couples the redox reaction to proton translocation, and thus conserves the redox energy in a proton gradient. The protein is NAD(P)H-quinone oxidoreductase subunit 5, chloroplastic (ndhF) of Phaseolus vulgaris (Kidney bean).